We begin with the raw amino-acid sequence, 151 residues long: Transcriptional regulator MraZ (151 aa).

SpoVT-AbrB domains follow at residues 5–56 (THRH…PLPT) and 85–128 (SEEL…DAAR).

The protein belongs to the MraZ family. Forms oligomers.

It is found in the cytoplasm. The protein localises to the nucleoid. The chain is Transcriptional regulator MraZ from Acidithiobacillus ferrooxidans (strain ATCC 23270 / DSM 14882 / CIP 104768 / NCIMB 8455) (Ferrobacillus ferrooxidans (strain ATCC 23270)).